Consider the following 275-residue polypeptide: Autophagy protein 5 (275 aa).

N-acetylmethionine is present on Met1. Lys130 participates in a covalent cross-link: Glycyl lysine isopeptide (Lys-Gly) (interchain with G-Cter in ATG12).

Belongs to the ATG5 family. As to quaternary structure, forms a conjugate with ATG12. Part of the minor complex composed of 4 sets of ATG12-ATG5 and ATG16L1 (400 kDa); this complex interacts with ATG3 leading to disruption of ATG7 interaction and promotion of ATG8-like proteins lipidation. Forms an 800-kDa complex composed of ATG12-ATG5 and ATG16L2. The ATG12-ATG5 conjugate interacts with RAB33A; this interaction is bridged by ATG16L1 and promotes ATG12-ATG5-ATG16L1 complex recruitment to phagophores. Interacts with TECPR1; the interaction is direct and does not take place when ATG16L1 is associated with the ATG5-ATG12 conjugate. Interacts with DHX58/RIG-1, IFIH1/MDA5 and MAVS/IPS-1 in monomeric form as well as in ATG12-ATG5 conjugate form. The interaction with MAVS is further enhanced upon vesicular stomatitis virus (VSV) infection. Interacts with ATG3. Interacts with ATG7 and ATG10. Interacts with FADD. Interacts with Bassoon/BSN; this interaction is important for the regulation of presynaptic autophagy. Interacts with ATG16L2. In terms of processing, conjugated to ATG12; which is essential for autophagy, but is not required for association with isolation membrane. Post-translationally, acetylated by EP300.

The protein resides in the cytoplasm. It is found in the preautophagosomal structure membrane. Its function is as follows. Involved in autophagic vesicle formation. Conjugation with ATG12, through a ubiquitin-like conjugating system involving ATG7 as an E1-like activating enzyme and ATG10 as an E2-like conjugating enzyme, is essential for its function. The ATG12-ATG5 conjugate acts as an E3-like enzyme which is required for lipidation of ATG8 family proteins and their association to the vesicle membranes. Involved in mitochondrial quality control after oxidative damage, and in subsequent cellular longevity. Plays a critical role in multiple aspects of lymphocyte development and is essential for both B and T lymphocyte survival and proliferation. Required for optimal processing and presentation of antigens for MHC II. Involved in the maintenance of axon morphology and membrane structures, as well as in normal adipocyte differentiation. Promotes primary ciliogenesis through removal of OFD1 from centriolar satellites and degradation of IFT20 via the autophagic pathway. As part of the ATG8 conjugation system with ATG12 and ATG16L1, required for recruitment of LRRK2 to stressed lysosomes and induction of LRRK2 kinase activity in response to lysosomal stress. Functionally, may play an important role in the apoptotic process, possibly within the modified cytoskeleton. Its expression is a relatively late event in the apoptotic process, occurring downstream of caspase activity. Plays a crucial role in IFN-gamma-induced autophagic cell death by interacting with FADD. This chain is Autophagy protein 5, found in Bos taurus (Bovine).